The chain runs to 462 residues: CD-NTase-associated protein 4 (462 aa).

Residues 1-226 are N-terminal endonuclease domain; sequence MSASLLEKQS…FENFICHALE (226 aa). Active-site residues include Asp-50, Glu-67, and Lys-69. Residue Asp-50 participates in Mg(2+) binding. The tract at residues 235-462 is C-terminal SAVED domain; it reads DPIKINLSAS…QYIPTAELNL (228 aa). 2',3',3'-c-tri-AMP-binding positions include 299 to 301, Trp-449, and Tyr-454; that span reads KQR.

The protein belongs to the Cap4 nuclease family. As to quaternary structure, a monomer in the absence of ligand, in its presence it forms oligomers. A divalent metal cation serves as cofactor.

With respect to regulation, DNase activity is activated upon ligand binding. Inhibited by EDTA. Functionally, effector DNase of a CBASS antivirus system. CBASS (cyclic oligonucleotide-based antiphage signaling system) provides immunity against bacteriophage. The CD-NTase protein synthesizes cyclic nucleotides in response to infection; these serve as specific second messenger signals. The signals activate a diverse range of effectors, leading to bacterial cell death and thus abortive phage infection. A type II-C(AAAA) CBASS system. Binds cyclic nucleotide second messengers (synthesized by CdnD, the cognate CD-NTase in the CBASS operon). Ligand binding activates it to endonucleolytically degrade dsDNA to approximately 6 bp length fragments, with a preference for 5'-C or 5'-G cleavage site. The minor product of CdnD is the activating nucleotide; also binds the major product (2',3',3'-cyclic AMP-AMP-AMP) but is not activated by it. Only binds DNA in the presence of ligand. Is not activated by c-di-AMP, c-di-GMP, 3'3'-cyclic GMP-AMP (3'3'-cGAMP) or 3',3',3'-cyclic AMP-AMP-GMP. This chain is CD-NTase-associated protein 4, found in Acinetobacter sp. (strain ATCC 27244 / 9458).